The following is a 121-amino-acid chain: Phosphoribosyl-ATP pyrophosphatase (121 aa).

The protein belongs to the PRA-PH family.

It localises to the cytoplasm. The catalysed reaction is 1-(5-phospho-beta-D-ribosyl)-ATP + H2O = 1-(5-phospho-beta-D-ribosyl)-5'-AMP + diphosphate + H(+). Its pathway is amino-acid biosynthesis; L-histidine biosynthesis; L-histidine from 5-phospho-alpha-D-ribose 1-diphosphate: step 2/9. The chain is Phosphoribosyl-ATP pyrophosphatase from Burkholderia vietnamiensis (strain G4 / LMG 22486) (Burkholderia cepacia (strain R1808)).